Reading from the N-terminus, the 438-residue chain is Serine/threonine-protein kinase VIK (438 aa).

The interval 1-31 is disordered; the sequence is MSSDSPAAGDGGEQAAAGTSVPSPSYDKQKE. 3 ANK repeats span residues 36–65, 70–99, and 103–133; these read SRTS…TLVH, DKRT…DVNA, and WKNT…SYGQ. The Protein kinase domain occupies 162 to 427; it reads FSNAAMIGKG…KRLEKIKETL (266 aa). Residues 168-176 and Lys189 each bind ATP; that span reads IGKGSFGEI. Asp285 (proton acceptor) is an active-site residue.

The protein belongs to the protein kinase superfamily. Ser/Thr protein kinase family. As to quaternary structure, interacts with BRL2. Binds to MSSP1/TMT1 at the tonoplast. Phosphorylated. As to expression, restricted to mature vascular cells. Mostly expressed in mature leaves and seeds, and, to a lower level, in seedlings, young leaves, flowers and siliques.

It localises to the vacuole. The enzyme catalyses L-seryl-[protein] + ATP = O-phospho-L-seryl-[protein] + ADP + H(+). It catalyses the reaction L-threonyl-[protein] + ATP = O-phospho-L-threonyl-[protein] + ADP + H(+). Its function is as follows. Serine/threonine protein kinase which may function as an adapter protein for BRL2. Required during vascular development for the establishment of vein pattern in foliar organs. Mediates MSSP1/TMT1 phosphorylation and activation to enhance its carrier activity and consequently vacuolar sugar accumulation, particularly in response to cold. This is Serine/threonine-protein kinase VIK from Arabidopsis thaliana (Mouse-ear cress).